A 663-amino-acid chain; its full sequence is Alpha-amylase MalA (663 aa).

Disordered stretches follow at residues 1-28 (MHHP…PTAT) and 80-135 (GTLE…LTLR). Positions 92–111 (RSGGHSGGVSGGRSGPGRSG) are enriched in gly residues. Catalysis depends on aspartate 411, which acts as the Nucleophile. Residue glutamate 440 is the Proton donor of the active site.

The protein belongs to the glycosyl hydrolase 13 family.

The protein resides in the cytoplasm. The enzyme catalyses Endohydrolysis of (1-&gt;4)-alpha-D-glucosidic linkages in polysaccharides containing three or more (1-&gt;4)-alpha-linked D-glucose units.. It participates in glycan degradation; starch degradation. Its activity is regulated as follows. Stable and active over a broad range of NaCl concentrations (0.5 to 4.2 M NaCl), with maximal activity at 2.6 M NaCl. 83% and 94% of the maximum activity at 0.6 and 4.2 M NaCl, respectively. Active and stable also in KCl. In terms of biological role, alpha-amylase that cleaves starch into oligosaccharides, the first step in starch degradation. Endo-acting enzyme which prefers a linear polysaccharide to branched polysaccharides hydrolyzing alpha-1,4 glucosidic bonds efficiently. Also has transglycosylation activity, but does not act on alpha-1,6 bonds. Higher activities of 100%, 79% and 67.8% against amylose, soluble starch and amylopectin, respectively. Lower activity of 22% against glycogen and faint or no activity against alpha-, beta- and gamma-cyclodextrin. This is Alpha-amylase MalA from Haloarcula japonica (strain ATCC 49778 / DSM 6131 / JCM 7785 / NBRC 101032 / NCIMB 13157 / TR-1).